The sequence spans 261 residues: MSESLHLTRNGPILEITLDRPKANAIDAKTSFAMGEAFLNFRDDPELRVAIITGGGEKFFSAGWDLKAAAEGEAPDADFGPGGFAGLTEIFDLDKPVIAAVNGYAFGGGFELALAADFIVCAENASFALPEAKLGIVPDSGGVLRLPKLLPPAIVNEMVMTGRRMSAEEALRWGVVNRVVSQSELMESARELAQQLVNSAPLAIAALKEIYRATSEMPVEEGYRYIRSGVLKHYPSVLHSEDALEGPQAFAEKRDPVWKGR.

Glu-111 serves as the catalytic Nucleophile. Residue Glu-131 is the Proton acceptor of the active site.

Belongs to the enoyl-CoA hydratase/isomerase family.

The enzyme catalyses (R)-carnitinyl-CoA = crotonobetainyl-CoA + H2O. It functions in the pathway amine and polyamine metabolism; carnitine metabolism. In terms of biological role, catalyzes the reversible dehydration of L-carnitinyl-CoA to crotonobetainyl-CoA. This chain is Carnitinyl-CoA dehydratase, found in Salmonella typhimurium (strain LT2 / SGSC1412 / ATCC 700720).